Consider the following 1079-residue polypeptide: Alpha-mannosidase C (1079 aa).

Positions 1-22 (MFYKTFGFLFIYLIILISGTLS) are cleaved as a signal peptide. Histidine 44 and aspartate 46 together coordinate Zn(2+). N-linked (GlcNAc...) asparagine glycosylation is found at asparagine 60 and asparagine 96. Aspartate 158 contacts Zn(2+). Aspartate 158 (nucleophile) is an active-site residue. 4 N-linked (GlcNAc...) asparagine glycosylation sites follow: asparagine 192, asparagine 222, asparagine 248, and asparagine 467. A Zn(2+)-binding site is contributed by histidine 475. Residues asparagine 516, asparagine 527, asparagine 589, asparagine 760, asparagine 769, asparagine 848, asparagine 872, asparagine 912, asparagine 1040, and asparagine 1057 are each glycosylated (N-linked (GlcNAc...) asparagine).

This sequence belongs to the glycosyl hydrolase 38 family. It depends on Zn(2+) as a cofactor.

It localises to the secreted. It catalyses the reaction Hydrolysis of terminal, non-reducing alpha-D-mannose residues in alpha-D-mannosides.. This Dictyostelium discoideum (Social amoeba) protein is Alpha-mannosidase C (manC).